The chain runs to 975 residues: E3 ubiquitin-protein ligase BRE1A (975 aa).

Positions 1 to 30 (MSGIGNKRAAGEPGTSMPPEKKAAVEDSGT) are disordered. At Lys21 the chain carries N6-acetyllysine. Ser41 carries the phosphoserine modification. Residues 43-90 (TEELDIRTLQTKNRKLAEMLDQRQAIEDELREHIEKLERRQATDDASL) are a coiled coil. The disordered stretch occupies residues 125-155 (KALVVPEPEPDSDSNQERKDDRERGEGQEPA). 2 positions are modified to phosphoserine: Ser136 and Ser138. The segment covering 139 to 151 (NQERKDDRERGEG) has biased composition (basic and acidic residues). 2 coiled-coil regions span residues 168–375 (EEME…EQVV) and 429–898 (SLHK…TTKK). N6-acetyllysine occurs at positions 348 and 510. Residues 507 to 622 (DLNKTRLRSG…GKHDDGRKKE (116 aa)) form a disordered region. Position 522 is a phosphoserine (Ser522). Basic and acidic residues predominate over residues 527-540 (EDPKDEPAELKPDS). Over residues 543 to 552 (LSSQSSASKA) the composition is skewed to low complexity. Over residues 558–622 (NEIKSKRDEE…GKHDDGRKKE (65 aa)) the composition is skewed to basic and acidic residues. A Phosphoserine modification is found at Ser562. Residues 922–961 (CPCCNMRKKDAVLTKCFHVFCFECVKTRYDTRQRKCPKCN) form an RING-type zinc finger.

This sequence belongs to the BRE1 family. Component of the RNF20/40 complex (also known as BRE1 complex) probably composed of 2 copies of RNF20/BRE1A and 2 copies of RNF40/BRE1B. Interacts with UBE2E1/UBCH6. Interacts with p53/TP53 and WAC. Interacts with PAF1; the interaction mediates the association of the PAF1 and RNF20/40 complexes which is a prerequsite for recruitment of UBE2A/B. Interacts with isoform 1 and isoform 2 of PA2G4. Interacts with FBXL19. In terms of assembly, (Microbial infection) Interacts with human herpesvirus 8 (KSHV) protein RTA/ORF50; this interaction targets the SMC5-SMC6 complex for proteasomal degradation. As to expression, expressed in the normal brain and also in malignant gliomas (at protein level).

The protein localises to the nucleus. It carries out the reaction S-ubiquitinyl-[E2 ubiquitin-conjugating enzyme]-L-cysteine + [acceptor protein]-L-lysine = [E2 ubiquitin-conjugating enzyme]-L-cysteine + N(6)-ubiquitinyl-[acceptor protein]-L-lysine.. The protein operates within protein modification; protein ubiquitination. Functionally, component of the RNF20/40 E3 ubiquitin-protein ligase complex that mediates monoubiquitination of 'Lys-120' of histone H2B (H2BK120ub1). H2BK120ub1 gives a specific tag for epigenetic transcriptional activation and is also prerequisite for histone H3 'Lys-4' and 'Lys-79' methylation (H3K4me and H3K79me, respectively). It thereby plays a central role inb histone code and gene regulation. The RNF20/40 complex forms a H2B ubiquitin ligase complex in cooperation with the E2 enzyme UBE2A or UBE2B; reports about the cooperation with UBE2E1/UBCH are contradictory. Required for transcriptional activation of Hox genes. Recruited to the MDM2 promoter, probably by being recruited by p53/TP53, and thereby acts as a transcriptional coactivator. Mediates the polyubiquitination of isoform 2 of PA2G4 in cancer cells leading to its proteasome-mediated degradation. (Microbial infection) Promotes the human herpesvirus 8 (KSHV) lytic cycle by inducing the expression of lytic viral genes including the latency switch gene RTA/ORF50. In Homo sapiens (Human), this protein is E3 ubiquitin-protein ligase BRE1A (RNF20).